A 309-amino-acid chain; its full sequence is Dicarboxylate carrier SLC25A8 (309 aa).

Residues 1–16 (MVGFKATDVPPTATVK) lie on the Mitochondrial intermembrane side of the membrane. Solcar repeat units follow at residues 11–106 (PTAT…VKQF), 114–203 (ASIG…IKDA), and 212–297 (DDLP…LKRA). An important for interaction with long-chain fatty acids region spans residues 16 to 63 (KFLGAGTAACIADLITFPLDTAKVRLQIQGESQGPVRATASAQYRGVM). The chain crosses the membrane as a helical span at residues 17–40 (FLGAGTAACIADLITFPLDTAKVR). Residues 41–77 (LQIQGESQGPVRATASAQYRGVMGTILTMVRTEGPRS) are Mitochondrial matrix-facing. Residues 78–103 (LYNGLVAGLQRQMSFASVRIGLYDSV) form a helical membrane-spanning segment. Residues 104-119 (KQFYTKGSEHASIGSR) are Mitochondrial intermembrane-facing. Residues 120–145 (LLAGSTTGALAVAVAQPTDVVKVRFQ) traverse the membrane as a helical segment. The Mitochondrial matrix portion of the chain corresponds to 146–173 (AQARAGGGRRYQSTVNAYKTIAREEGFR). The chain crosses the membrane as a helical span at residues 174–199 (GLWKGTSPNVARNAIVNCAELVTYDL). At 200 to 217 (IKDALLKANLMTDDLPCH) the chain is on the mitochondrial intermembrane side. Residues 218–242 (FTSAFGAGFCTTVIASPVDVVKTRY) traverse the membrane as a helical segment. Topologically, residues 243-268 (MNSALGQYSSAGHCALTMLQKEGPRA) are mitochondrial matrix. The chain crosses the membrane as a helical span at residues 269-294 (FYKGFMPSFLRLGSWNVVMFVTYEQL). Residues 278–285 (LRLGSWNV) form an important for interaction with long-chain fatty acids region. Topologically, residues 295–309 (KRALMAACTSREAPF) are mitochondrial intermembrane.

It belongs to the mitochondrial carrier (TC 2.A.29) family. Homotetramer. Adopts an asymmetrical dimer of dimers functional form. As to expression, widely expressed in adult human tissues, including tissues rich in macrophages. Most expressed in white adipose tissue and skeletal muscle.

The protein resides in the mitochondrion inner membrane. The catalysed reaction is L-aspartate(out) + phosphate(in) + H(+)(in) = L-aspartate(in) + phosphate(out) + H(+)(out). It catalyses the reaction oxaloacetate(out) + phosphate(in) + H(+)(in) = oxaloacetate(in) + phosphate(out) + H(+)(out). It carries out the reaction (S)-malate(out) + phosphate(in) + H(+)(in) = (S)-malate(in) + phosphate(out) + H(+)(out). The enzyme catalyses malonate(out) + phosphate(in) + H(+)(in) = malonate(in) + phosphate(out) + H(+)(out). The catalysed reaction is sulfate(out) + phosphate(in) + H(+)(in) = sulfate(in) + phosphate(out) + H(+)(out). It catalyses the reaction (S)-malate(out) = (S)-malate(in). It carries out the reaction L-aspartate(out) = L-aspartate(in). The enzyme catalyses phosphate(in) = phosphate(out). The catalysed reaction is chloride(in) = chloride(out). It catalyses the reaction H(+)(in) = H(+)(out). It carries out the reaction a long-chain fatty acid(out) = a long-chain fatty acid(in). With respect to regulation, inhibited by pyridoxal- 5'-phosphate, bathophenanthroline, tannic acid, bromocresol purple, butylmalonate and phenylsuccinate. Proton conductance is activated by cardiolipin and long-chain free fatty acids and inhibited by purine nucleotides ATP and ADP. Chloride ion transporter activity is inhibited by long-chain free fatty acids. In terms of biological role, antiporter that exports dicarboxylate intermediates of the Krebs cycle in exchange for phosphate plus a proton across the inner membrane of mitochondria, a process driven by mitochondrial motive force with an overall impact on glycolysis, glutaminolysis and glutathione-dependent redox balance. Continuous export of oxaloacetate and related four-carbon dicarboxylates from mitochondrial matrix into the cytosol negatively regulates the oxidation of acetyl-CoA substrates via the Krebs cycle, lowering the ATP/ADP ratio and reactive oxygen species (ROS) production. May mediate inducible proton entry into the mitochondrial matrix affecting ATP turnover as a protection mechanism against oxidative stress. The proton currents are most likely associated with fatty acid flipping across the inner membrane of mitochondria in a metabolic process regulated by free fatty acids and purine nucleotides. Regulates the use of glucose as a source of energy. Required for glucose-induced DRP1-dependent mitochondrial fission and neuron activation in the ventromedial nucleus of the hypothalamus (VMH). This mitochondrial adaptation mechanism modulates the VMH pool of glucose-excited neurons with an impact on systemic glucose homeostasis. Regulates ROS levels and metabolic reprogramming of macrophages during the resolution phase of inflammation. Attenuates ROS production in response to IL33 to preserve the integrity of the Krebs cycle required for persistent production of itaconate and subsequent GATA3-dependent differentiation of inflammation-resolving alternatively activated macrophages. Can unidirectionally transport anions including L-malate, L-aspartate, phosphate and chloride ions. Does not mediate adaptive thermogenesis. This is Dicarboxylate carrier SLC25A8 (UCP2) from Homo sapiens (Human).